The chain runs to 199 residues: Probable GTP-binding protein EngB (199 aa).

Positions isoleucine 21–glycine 195 constitute an EngB-type G domain. GTP is bound by residues glycine 29–serine 36, glycine 56–leucine 60, aspartate 81–glycine 84, threonine 151–aspartate 154, and valine 174–asparagine 176. Serine 36 and threonine 58 together coordinate Mg(2+).

Belongs to the TRAFAC class TrmE-Era-EngA-EngB-Septin-like GTPase superfamily. EngB GTPase family. Mg(2+) serves as cofactor.

In terms of biological role, necessary for normal cell division and for the maintenance of normal septation. The polypeptide is Probable GTP-binding protein EngB (Campylobacter lari (strain RM2100 / D67 / ATCC BAA-1060)).